A 427-amino-acid polypeptide reads, in one-letter code: MLTLLEKFIQKIEEYNLIEENDRILVAVSGGVDSSVLLNLLARVQEYFKFSIFCATVDHGIRKESKEEVKFVYNMAQSLNVECFIKEFDVPLYAKENKLSIEEAARKLRYKFLNEIAKKINANKVATAHNLNDLAETVLFRLARGTGPFGIYGMKPRNGNIIRPLLFFERKEIEQFATENKIPFVVDKTNFDTKYTRNFIRHKIIPIFKEINPLFEQAVLRFVENVWELDSFVKDKLNVETFEFEGRIFFKVPKDEYILVEFIRRKTMEHFGRAPDKEKLDRLKKNLYKTSFKISFWGDYGVEISYGYGVLGKFIEHMNYECSMDCQNNVNFGPFVVKFGNNGIIFKKMNLTIRNYRFGDKTKGGKKLKEIFVEKKVPSFIRRIIPIFVDEDGYVFYIPNVFLDRDYLSKEENGISIKVEMKGGFWF.

29–34 (SGGVDS) serves as a coordination point for ATP.

The protein belongs to the tRNA(Ile)-lysidine synthase family.

The protein localises to the cytoplasm. The catalysed reaction is cytidine(34) in tRNA(Ile2) + L-lysine + ATP = lysidine(34) in tRNA(Ile2) + AMP + diphosphate + H(+). In terms of biological role, ligates lysine onto the cytidine present at position 34 of the AUA codon-specific tRNA(Ile) that contains the anticodon CAU, in an ATP-dependent manner. Cytidine is converted to lysidine, thus changing the amino acid specificity of the tRNA from methionine to isoleucine. The polypeptide is tRNA(Ile)-lysidine synthase (Thermosipho africanus (strain TCF52B)).